The primary structure comprises 185 residues: Ribose 1,5-bisphosphate phosphokinase PhnN (185 aa).

10–17 (GPSGSGKD) lines the ATP pocket.

The protein belongs to the ribose 1,5-bisphosphokinase family.

It catalyses the reaction alpha-D-ribose 1,5-bisphosphate + ATP = 5-phospho-alpha-D-ribose 1-diphosphate + ADP. It functions in the pathway metabolic intermediate biosynthesis; 5-phospho-alpha-D-ribose 1-diphosphate biosynthesis; 5-phospho-alpha-D-ribose 1-diphosphate from D-ribose 5-phosphate (route II): step 3/3. Catalyzes the phosphorylation of ribose 1,5-bisphosphate to 5-phospho-D-ribosyl alpha-1-diphosphate (PRPP). Accepts ATP but not GTP as a phosphoryl donor, and uses ribose 1,5-bisphosphate but not ribose, ribose 1-phosphate, or ribose 5-phosphate as a phosphoryl acceptor. The chain is Ribose 1,5-bisphosphate phosphokinase PhnN (phnN) from Escherichia coli (strain K12).